The following is a 448-amino-acid chain: Probable glycine dehydrogenase (decarboxylating) subunit 1 (448 aa).

It belongs to the GcvP family. N-terminal subunit subfamily. The glycine cleavage system is composed of four proteins: P, T, L and H. In this organism, the P 'protein' is a heterodimer of two subunits.

It carries out the reaction N(6)-[(R)-lipoyl]-L-lysyl-[glycine-cleavage complex H protein] + glycine + H(+) = N(6)-[(R)-S(8)-aminomethyldihydrolipoyl]-L-lysyl-[glycine-cleavage complex H protein] + CO2. Its function is as follows. The glycine cleavage system catalyzes the degradation of glycine. The P protein binds the alpha-amino group of glycine through its pyridoxal phosphate cofactor; CO(2) is released and the remaining methylamine moiety is then transferred to the lipoamide cofactor of the H protein. This Staphylococcus aureus (strain USA300) protein is Probable glycine dehydrogenase (decarboxylating) subunit 1.